The sequence spans 341 residues: N-acetyl-gamma-glutamyl-phosphate reductase (341 aa).

The active site involves Cys147.

Belongs to the NAGSA dehydrogenase family. Type 1 subfamily.

It is found in the cytoplasm. It catalyses the reaction N-acetyl-L-glutamate 5-semialdehyde + phosphate + NADP(+) = N-acetyl-L-glutamyl 5-phosphate + NADPH + H(+). The protein operates within amino-acid biosynthesis; L-arginine biosynthesis; N(2)-acetyl-L-ornithine from L-glutamate: step 3/4. Catalyzes the NADPH-dependent reduction of N-acetyl-5-glutamyl phosphate to yield N-acetyl-L-glutamate 5-semialdehyde. In Dehalococcoides mccartyi (strain ATCC BAA-2266 / KCTC 15142 / 195) (Dehalococcoides ethenogenes (strain 195)), this protein is N-acetyl-gamma-glutamyl-phosphate reductase.